Reading from the N-terminus, the 418-residue chain is S-adenosylmethionine synthase (418 aa).

His16 contacts ATP. Position 18 (Asp18) interacts with Mg(2+). Glu44 contributes to the K(+) binding site. Glu57 and Gln100 together coordinate L-methionine. The interval 100-110 is flexible loop; sequence QSPDISQGVTK. ATP is bound by residues 175 to 177, 251 to 252, Asp260, 266 to 267, Ala283, and Lys287; these read DGK, KF, and RK. Asp260 provides a ligand contact to L-methionine. Lys291 provides a ligand contact to L-methionine.

It belongs to the AdoMet synthase family. Homotetramer; dimer of dimers. Mg(2+) is required as a cofactor. K(+) serves as cofactor.

Its subcellular location is the cytoplasm. It catalyses the reaction L-methionine + ATP + H2O = S-adenosyl-L-methionine + phosphate + diphosphate. It functions in the pathway amino-acid biosynthesis; S-adenosyl-L-methionine biosynthesis; S-adenosyl-L-methionine from L-methionine: step 1/1. Functionally, catalyzes the formation of S-adenosylmethionine (AdoMet) from methionine and ATP. The overall synthetic reaction is composed of two sequential steps, AdoMet formation and the subsequent tripolyphosphate hydrolysis which occurs prior to release of AdoMet from the enzyme. The polypeptide is S-adenosylmethionine synthase (Gloeothece citriformis (strain PCC 7424) (Cyanothece sp. (strain PCC 7424))).